Reading from the N-terminus, the 471-residue chain is MKRPAQLVFVPAPGIGHIVSTVEMAKQLAARDDQLFITVLVMKLPYAQPFTNTDSSISHRINFVNLPEAQPDKQDIVPNPGSFFRMFVENHKSHVRDAVINVLPESDQSESTSKPRLAGFVLDMFSASLIDVANEFKVPSYLFFTSNASALALMSHFQSLRDEGGIDITELTSSTAELAVPSFINPYPAAVLPGSLLDMESTKSTLNHVSKYKQTKGILVNTFMELESHALHYLDSGDKIPPVYPVGPLLNLKSSDEDKASDILRWLDDQPPFSVVFLCFGSMGSFGEAQVKEIACALEHSGHRFLWSLRRPPPQGKRAMPSDYEDLKTVLPEGFLDRTATVGKVIGWAPQAAILGHPATGGFVSHCGWNSTLESLWNGVPIAAWPLYAEQNLNAFQLVVELGLAVEIKMDYRRDSDVVVSAEDIERGIRRVMELDSDVRKRVKEMSEKSKKALVDGGSSYSSLGRFIDKI.

Residues serine 282, 348–349 (WA), 366–374 (HCGWNSTLE), and 388–391 (YAEQ) each bind UDP-alpha-D-glucose.

It belongs to the UDP-glycosyltransferase family.

Glycosyltransferase that possesses chalcone and flavonol 2'-O-glycosyltransferase activity. Converts phloretin to phlorizin (phloretin 2'-O-glucoside), a potent antioxidant. Possesses glycosyltransferase activity toward, naringenin, naringenin chalcone, eriodictyol, eriodictyol chalcone, apigenin, luteolin, kaempferol, quercetin, isoliquiritigenin, butein and caffeic acid. Can convert phloretin to phloretin 4'-O-glucoside and phloretin 4-O-glucoside. This is UDP-glycosyltransferase 71A15 from Malus domestica (Apple).